Here is a 469-residue protein sequence, read N- to C-terminus: UDP-N-acetylmuramate--L-alanine ligase (469 aa).

ATP is bound at residue 122-128 (GTHGKTT).

Belongs to the MurCDEF family.

It is found in the cytoplasm. It catalyses the reaction UDP-N-acetyl-alpha-D-muramate + L-alanine + ATP = UDP-N-acetyl-alpha-D-muramoyl-L-alanine + ADP + phosphate + H(+). It participates in cell wall biogenesis; peptidoglycan biosynthesis. Cell wall formation. The chain is UDP-N-acetylmuramate--L-alanine ligase from Legionella pneumophila subsp. pneumophila (strain Philadelphia 1 / ATCC 33152 / DSM 7513).